The primary structure comprises 391 residues: E1B 55 kDa protein (391 aa).

Serine 387 carries the post-translational modification Phosphoserine.

It belongs to the adenoviridae E1B 55 kDa protein family. In terms of assembly, interacts with host PML-4 and PML-5; this interaction promotes efficient subnuclear targeting of E1B-55K to PML nuclear bodies. Interacts with E4-ORF3 protein. Interacts with E4-ORF6 protein.

Its subcellular location is the host nucleus. The protein resides in the host cytoplasm. Plays a major role to prevent cellular inhibition of viral genome replication. Assembles an SCF-like E3 ubiquitin ligase complex based on the cellular proteins ELOB, ELOC, CUL5 and RBX1, in cooperation with viral E4orf6. This viral RING-type ligase ubiquitinates cellular substrates and targets them to proteasomal degradation: TP53/p53, LIG4, MRE11-RAD50-NBS1 (MRN) complex, ITGA3, DAXX and BLM. E1B-55K probably acts as the substrate-specific adapter of the SCF-like E3 ubiquitin ligase complex. Degradation of host TP53/p53 activity is essential for preventing E1A-induced TP53 accumulation that would otherwise lead to cell apoptosis and growth arrest. E1B-55K also inactivates TP53 transcription-factor activity by binding its transactivation domain. E1B-55K also functions as a SUMO1 E3 ligase for TP53 which causes the latter to be sequestered in promyelocytic leukemia (PML) nuclear bodies thereby contributing to maximal inhibition of TP53 function. The chain is E1B 55 kDa protein from Tree shrew adenovirus serotype 1 (TSAdV-1).